A 179-amino-acid chain; its full sequence is Probable chorismate pyruvate-lyase (179 aa).

Residues Arg82, Leu120, and Glu165 each coordinate substrate.

Belongs to the UbiC family.

The protein localises to the cytoplasm. The catalysed reaction is chorismate = 4-hydroxybenzoate + pyruvate. The protein operates within cofactor biosynthesis; ubiquinone biosynthesis. In terms of biological role, removes the pyruvyl group from chorismate, with concomitant aromatization of the ring, to provide 4-hydroxybenzoate (4HB) for the ubiquinone pathway. This chain is Probable chorismate pyruvate-lyase, found in Vibrio vulnificus (strain CMCP6).